A 41-amino-acid chain; its full sequence is Plantazolicin (41 aa).

Residues 1-27 constitute a propeptide that is removed on maturation; the sequence is MTQIKVPTALIASVHGEGQHLFEPMAA. Residue Arg28 is modified to N2,N2-dimethylarginine. Residues 28-29 constitute a cross-link (thiazole-4-carboxylic acid (Arg-Cys)); sequence RC. Cross-links (5-methyloxazole-4-carboxylic acid (Cys-Thr)) lie at residues 29-30 and 31-32; these read CT. Positions 30–31 form a cross-link, thiazole-4-carboxylic acid (Thr-Cys); it reads TC. The 5-methyloxazole-4-carboxylic acid (Thr-Thr) cross-link spans 32 to 33; that stretch reads TT. Positions 35 to 36 form a cross-link, oxazole-4-carboxylic acid (Ile-Ser); that stretch reads IS. 3 consecutive cross-links (oxazole-4-carboxylic acid (Ser-Ser)) follow at residues 36 to 37, 37 to 38, and 38 to 39; these read SS. The segment at residues 39–40 is a cross-link (5-methyloxazoline-4-carboxylic acid (Ser-Thr)); it reads ST.

In terms of processing, maturation of thiazole and oxazole containing antibiotics involves the enzymatic condensation of a Cys, Ser or Thr with the alpha-carbonyl of the preceding amino acid to form a thioether or ether bond, then dehydration to form a double bond with the alpha-amino nitrogen. Thiazoline or oxazoline ring are dehydrogenated to form thiazole or oxazole rings. 2 forms exist: plantazolicin A and plantazolicin B. The structural difference between them is a dimethylation at Arg-28 in plantazolicin A.

It localises to the secreted. It is found in the cell wall. Its function is as follows. Peptide antibiotic inhibiting growth of Gram-positive bacteria in the dimethylated form plantazolicin A. The desmethyl form plantazolicin B has no antibiotic activity. The mode of action appears to be disruption of cell walls and lysis of cells. Inhibits B.subtilis strain HB0042, B.megaterium strain 7A1 and B.anthracis (MIC=2-4 ug/ml). Weakly inhibits Gram-positive bacteria B.brevis strain ATCC 8246, B.subtilis strain 168, B.cereus strain ATCC 14579 and strain CU1065, B.licheniformis strain ATCC 9789, M.luteus, B.sphaericus, P.granivorans and S.pyogenes (MIC=128 ug/ml). Does not inhibit B.pumilus, P.polymyxa, Arthrobacter sp., S.aureus, vancomycin-resistant E.faecalis, L.monocytogenes, methicillin-resistant S.aureus or Gram-negative bacteria E.coli strain K12, K.terrigena, Pseudomonas sp. and E.carotovora. The protein is Plantazolicin of Bacillus velezensis (strain DSM 23117 / BGSC 10A6 / LMG 26770 / FZB42) (Bacillus amyloliquefaciens subsp. plantarum).